The chain runs to 379 residues: MPDPVRIGIVAGEVSGDILAAGLVRELQARYPDAQFEGIAGPRMQALGVKALFEMEELSVMGITEVLGRLPRILKVRRELLRHFIANPPDIFIGVDAPDFNIGVELKLRRAGIKTVHYVSPSVWAWRQNRIHKIKAATDMVLAFLPFEKAFYDRFDAPCRFVGHTMADDIPLVPDQAAVRRTLGIDANRRWLAVLPGSRSAEVGFMSPLFLEACKHLTVRYPDLGFIVPLVNQKRREQFLAIKAELAPDLDMVLLEGQGREAMIAADVVMLASGTAALEAMLVKKPMVVGYKLKPFSYWLAQRLVKTEFVSLPNLLAGRMLVPELIQHECTPENLVVEVSKFFEHDNSALVNTFTELHQLIRCNADQQAAEAVAELLGR.

The protein belongs to the LpxB family.

The catalysed reaction is a lipid X + a UDP-2-N,3-O-bis[(3R)-3-hydroxyacyl]-alpha-D-glucosamine = a lipid A disaccharide + UDP + H(+). The protein operates within bacterial outer membrane biogenesis; LPS lipid A biosynthesis. In terms of biological role, condensation of UDP-2,3-diacylglucosamine and 2,3-diacylglucosamine-1-phosphate to form lipid A disaccharide, a precursor of lipid A, a phosphorylated glycolipid that anchors the lipopolysaccharide to the outer membrane of the cell. The chain is Lipid-A-disaccharide synthase from Aeromonas hydrophila subsp. hydrophila (strain ATCC 7966 / DSM 30187 / BCRC 13018 / CCUG 14551 / JCM 1027 / KCTC 2358 / NCIMB 9240 / NCTC 8049).